A 427-amino-acid chain; its full sequence is Peptidase B (427 aa).

Mn(2+) contacts are provided by K195 and D200. The active site involves K207. Mn(2+) contacts are provided by D218, D277, and E279. Residue R281 is part of the active site.

Belongs to the peptidase M17 family. As to quaternary structure, homohexamer. Mn(2+) serves as cofactor.

It localises to the cytoplasm. It carries out the reaction Release of an N-terminal amino acid, Xaa, from a peptide or arylamide. Xaa is preferably Glu or Asp but may be other amino acids, including Leu, Met, His, Cys and Gln.. Functionally, probably plays an important role in intracellular peptide degradation. This chain is Peptidase B, found in Escherichia coli O7:K1 (strain IAI39 / ExPEC).